The following is a 263-amino-acid chain: Troponin T, slow skeletal muscle (263 aa).

The segment covering 1–38 has biased composition (acidic residues); that stretch reads MSDAEEQEYEEEQPEEEEAAEEEEEAPEEPEPAAEPEE. 2 disordered regions span residues 1-64 and 109-154; these read MSDA…RVDF and AERA…KKKV. Serine 2 is modified (phosphoserine; by CK2). Residues 44-56 are compositionally biased toward pro residues; it reads SRPVVPPLIPPKI. The span at 109–150 shows a compositional bias: basic and acidic residues; it reads AERAEQQRFRTEKERERQAKLAEEKMRKEEEEAKKRAEDDAK.

The protein belongs to the troponin T family. Interacts with TPM3. As to expression, expressed dominantly in slow muscles, like masseter, diaphragm, psoas major and spinnalis. Isoform 2 is also expressed in fast muscles.

Functionally, troponin T is the tropomyosin-binding subunit of troponin, the thin filament regulatory complex which confers calcium-sensitivity to striated muscle actomyosin ATPase activity. The chain is Troponin T, slow skeletal muscle (TNNT1) from Bos taurus (Bovine).